Reading from the N-terminus, the 698-residue chain is Serotransferrin (698 aa).

A signal peptide spans 1-19; it reads MRLAVGALLVCAVLGLCLA. Transferrin-like domains lie at 25 to 347 and 361 to 683; these read VRWC…NLRE and VKWC…NLRK. 2 disulfide bridges follow: cysteine 28–cysteine 67 and cysteine 38–cysteine 58. Residue arginine 42 is modified to Dimethylated arginine. O-linked (GalNAc...) serine glycosylation occurs at serine 51. Fe(3+)-binding residues include aspartate 82 and tyrosine 114. 17 cysteine pairs are disulfide-bonded: cysteine 137-cysteine 213, cysteine 156-cysteine 350, cysteine 177-cysteine 193, cysteine 180-cysteine 196, cysteine 190-cysteine 198, cysteine 246-cysteine 260, cysteine 358-cysteine 615, cysteine 364-cysteine 396, cysteine 374-cysteine 387, cysteine 421-cysteine 693, cysteine 437-cysteine 656, cysteine 469-cysteine 542, cysteine 493-cysteine 684, cysteine 503-cysteine 517, cysteine 514-cysteine 525, cysteine 582-cysteine 596, and cysteine 634-cysteine 639. Positions 139, 143, 145, and 146 each coordinate hydrogencarbonate. Tyrosine 207 is a Fe(3+) binding site. Histidine 268 lines the Fe(3+) pocket. Serine 389 is subject to Phosphoserine. Fe(3+)-binding residues include aspartate 411 and tyrosine 445. Hydrogencarbonate contacts are provided by threonine 471, arginine 475, alanine 477, and glycine 478. Tyrosine 536 lines the Fe(3+) pocket. Histidine 604 contributes to the Fe(3+) binding site. Residue asparagine 630 is glycosylated (N-linked (GlcNAc...) asparagine). Serine 685 is modified (phosphoserine).

This sequence belongs to the transferrin family. As to quaternary structure, monomer. Part of a complex composed of SLC40A1/ferroportin, TF/transferrin and HEPH/hephaestin that transfers iron from cells to transferrin. As to expression, expressed by the liver and secreted in plasma.

The protein localises to the secreted. Functionally, transferrins are iron binding transport proteins which can bind two Fe(3+) ions in association with the binding of an anion, usually bicarbonate. It is responsible for the transport of iron from sites of absorption and heme degradation to those of storage and utilization. Serum transferrin may also have a further role in stimulating cell proliferation. The protein is Serotransferrin (TF) of Pan troglodytes (Chimpanzee).